An 890-amino-acid polypeptide reads, in one-letter code: Protein FAM171A1 (890 aa).

Residues methionine 1–threonine 21 form the signal peptide. Residues lysine 22–threonine 303 are Extracellular-facing. Asparagine 190 and asparagine 194 each carry an N-linked (GlcNAc...) asparagine glycan. The helical transmembrane segment at valine 304–leucine 324 threads the bilayer. At leucine 325–lysine 890 the chain is on the cytoplasmic side. 6 positions are modified to phosphoserine: serine 358, serine 360, serine 371, serine 422, serine 443, and serine 525. Disordered regions lie at residues alanine 730–alanine 759 and glutamate 818–lysine 890. Residues asparagine 747–glycine 757 show a composition bias toward basic and acidic residues. Polar residues predominate over residues arginine 822 to glutamate 833. 2 positions are modified to phosphoserine: serine 849 and serine 855. The span at glutamate 858–glycine 869 shows a compositional bias: acidic residues. Residues glutamate 870–proline 883 are compositionally biased toward basic and acidic residues.

Belongs to the FAM171 family. Interacts with ADAM10, NSG1 and OAZ1.

The protein resides in the cell membrane. Involved in the regulation of the cytoskeletal dynamics, plays a role in actin stress fiber formation. This is Protein FAM171A1 (FAM171A1) from Pongo abelii (Sumatran orangutan).